A 451-amino-acid chain; its full sequence is Glycylpeptide N-tetradecanoyltransferase (451 aa).

Residues Leu-177–Ile-179 and Asn-185–Ala-189 each bind tetradecanoyl-CoA. The Proton acceptor; via carboxylate role is filled by Leu-451.

It belongs to the NMT family. In terms of assembly, monomer.

Its subcellular location is the cytoplasm. It catalyses the reaction N-terminal glycyl-[protein] + tetradecanoyl-CoA = N-tetradecanoylglycyl-[protein] + CoA + H(+). Competitively inhibited by SC-58272, a peptidomimetic derived from the N-terminal sequence of a natural substrate. Its function is as follows. Adds a myristoyl group to the N-terminal glycine residue of certain cellular proteins. Substrate specificity requires an N-terminal glycine in the nascent polypeptide substrates. Ser is present at position 5 in almost all known N-myristoyl proteins and Lys is commonly encountered at postion 6. Basic residues are preferred at positions 7 and 8. The protein is Glycylpeptide N-tetradecanoyltransferase (NMT1) of Candida albicans (strain SC5314 / ATCC MYA-2876) (Yeast).